Reading from the N-terminus, the 133-residue chain is Small ribosomal subunit protein uS8 (133 aa).

Belongs to the universal ribosomal protein uS8 family. As to quaternary structure, part of the 30S ribosomal subunit.

In terms of biological role, one of the primary rRNA binding proteins, it binds directly to 16S rRNA central domain where it helps coordinate assembly of the platform of the 30S subunit. This is Small ribosomal subunit protein uS8 from Aeropyrum pernix (strain ATCC 700893 / DSM 11879 / JCM 9820 / NBRC 100138 / K1).